The chain runs to 509 residues: Probable basic-leucine zipper transcription factor H (509 aa).

The segment at 1–42 is disordered; it reads MMNSPRSLDSSDGSVDSSSVYSGTSSFGSSFTSSTGSGFTNS. Over residues 10-39 the composition is skewed to low complexity; that stretch reads SSDGSVDSSSVYSGTSSFGSSFTSSTGSGF. In terms of domain architecture, bZIP spans 50–113; that stretch reads AKKKKIRQMQ…NENYLKINQL (64 aa). Residues 51–77 are basic motif; that stretch reads KKKKIRQMQNRQSAAQYRERKKEYLEK. The interval 78–99 is leucine-zipper; it reads LETIVDNLESDRNQLLQQTKQL. 4 disordered regions span residues 134–185, 223–275, 290–414, and 465–509; these read LLSK…SNNG, FSHL…SRFN, IENV…IINN, and SNNN…GIPK. Low complexity-rich tracts occupy residues 226-248, 255-269, 292-350, 361-414, 465-483, and 490-509; these read LQQQ…SPIP, PIQQ…QNIN, NVNN…SNRS, QQQQ…IINN, SNNN…NSPS, and NGGI…GIPK.

The protein belongs to the bZIP family.

The protein resides in the nucleus. In terms of biological role, probable transcriptional regulator. This is Probable basic-leucine zipper transcription factor H (bzpH) from Dictyostelium discoideum (Social amoeba).